The following is a 158-amino-acid chain: 6,7-dimethyl-8-ribityllumazine synthase (158 aa).

5-amino-6-(D-ribitylamino)uracil-binding positions include Phe22, Ser57–Glu59, and Thr81–Ile83. Residue His89 is the Proton donor of the active site. Phe114 is a 5-amino-6-(D-ribitylamino)uracil binding site. (2S)-2-hydroxy-3-oxobutyl phosphate is bound at residue Arg128.

Belongs to the DMRL synthase family. In terms of assembly, forms an icosahedral capsid composed of 60 subunits, arranged as a dodecamer of pentamers.

The enzyme catalyses (2S)-2-hydroxy-3-oxobutyl phosphate + 5-amino-6-(D-ribitylamino)uracil = 6,7-dimethyl-8-(1-D-ribityl)lumazine + phosphate + 2 H2O + H(+). It participates in cofactor biosynthesis; riboflavin biosynthesis; riboflavin from 2-hydroxy-3-oxobutyl phosphate and 5-amino-6-(D-ribitylamino)uracil: step 1/2. Catalyzes the formation of 6,7-dimethyl-8-ribityllumazine by condensation of 5-amino-6-(D-ribitylamino)uracil with 3,4-dihydroxy-2-butanone 4-phosphate. This is the penultimate step in the biosynthesis of riboflavin. In Blochmanniella pennsylvanica (strain BPEN), this protein is 6,7-dimethyl-8-ribityllumazine synthase.